A 164-amino-acid chain; its full sequence is MPRSLRAELSKPYGVLFINENKLKQFLINKSNSRLITVGDVVTQTILKFHIKPFLAIVDGKTKRKLVKENFGQFEYIKVKNEPGLIRLSTIREIKDILVHNENDKILMVDGEEDLLVIPVVIYGNFGDIIIYGQPNAGVVVTLNNDFLKRRVLEIFKKFQVTSC.

Residues aspartate 40, valine 41, valine 42, aspartate 59, lysine 61, and glutamate 113 each coordinate GTP.

It belongs to the GTP-dependent DPCK family.

It carries out the reaction 3'-dephospho-CoA + GTP = GDP + CoA + H(+). The protein operates within cofactor biosynthesis; coenzyme A biosynthesis. Its function is as follows. Catalyzes the GTP-dependent phosphorylation of the 3'-hydroxyl group of dephosphocoenzyme A to form coenzyme A (CoA). This is GTP-dependent dephospho-CoA kinase from Sulfolobus acidocaldarius (strain ATCC 33909 / DSM 639 / JCM 8929 / NBRC 15157 / NCIMB 11770).